Here is a 261-residue protein sequence, read N- to C-terminus: MHFEVHGRTDAEAPTILLSSGLGGSSAYWLPQIEALSDHFRIVTYDHRGTGRTGGEVPTEGGISAMADDVLEIVSALNLEKFHFMGHALGGLIGLDIALRQPRLIDRLVLINAWSKADPHSGRCFDVRIELLEKSGVDAFVKAQPLFLYPAAWMSEHQERLARDDAHGVAHFQGKTNVLRRIAALRAFDIDARLGEIGNPVLVVATKDDLLVPYTRSLRLAEGLPQSELCLLDFGAHAVNITEPDLFNTRLLQFLLPADQT.

An AB hydrolase-1 domain is found at 14 to 119; that stretch reads PTILLSSGLG…LINAWSKADP (106 aa).

Belongs to the AB hydrolase superfamily. Hydrolase RutD family.

The catalysed reaction is carbamate + 2 H(+) = NH4(+) + CO2. Its function is as follows. Involved in pyrimidine catabolism. May facilitate the hydrolysis of carbamate, a reaction that can also occur spontaneously. The polypeptide is Putative carbamate hydrolase RutD (Agrobacterium fabrum (strain C58 / ATCC 33970) (Agrobacterium tumefaciens (strain C58))).